The primary structure comprises 2512 residues: Isonitrile lipopeptide synthase (2512 aa).

2 consecutive Carrier domains span residues 935–1003 (AAGL…PTPD) and 1984–2059 (APAG…GRDA). Residues serine 963 and serine 2019 each carry the O-(pantetheine 4'-phosphoryl)serine modification. The region spanning 2112 to 2372 (LTGATGFLGR…LPVTFVAEAI (261 aa)) is the Thioester reductase (TE) domain.

The protein belongs to the ATP-dependent AMP-binding enzyme family. Pantetheine 4'-phosphate is required as a cofactor.

The catalysed reaction is 2 a (3R)-3-isocyanyl-fatty acyl-[ACP] + L-lysine + ATP + 2 NADPH = an isonitrile lipopeptide + 2 holo-[ACP] + AMP + diphosphate + 2 NADP(+). Its function is as follows. Nonribosomal peptide synthetase (NRPS) involved in the biosynthesis of a unique class of isonitrile lipopeptides (INLPs) that seem to function as virulence factors in M.tuberculosis and to play a role in metal acquisition. Catalyzes the final step in the pathway, i.e. the condensation of a (3R)-3-isocyanyl-fatty acyl-[ACP] to both amino groups of a lysine, producing isonitrile lipopeptides. In Mycobacterium tuberculosis (strain ATCC 25618 / H37Rv), this protein is Isonitrile lipopeptide synthase.